Here is a 396-residue protein sequence, read N- to C-terminus: Period circadian protein (396 aa).

4 disordered regions span residues V27–V120, S167–E188, G253–Q275, and S333–A362. A compositionally biased stretch (gly residues) spans G93–S114. The segment covering G253 to N262 has biased composition (gly residues). The span at S333–N342 shows a compositional bias: low complexity.

In terms of assembly, forms a heterodimer with timeless (TIM); the complex then translocates into the nucleus. In terms of processing, phosphorylated with a circadian rhythmicity, probably by the double-time protein (dbt). Phosphorylation could be implicated in the stability of per monomer and in the formation of heterodimer per-tim.

Its subcellular location is the nucleus. It is found in the cytoplasm. The protein localises to the perinuclear region. In terms of biological role, essential for biological clock functions. Determines the period length of circadian and ultradian rhythms; an increase in PER dosage leads to shortened circadian rhythms and a decrease leads to lengthened circadian rhythms. Essential for the circadian rhythmicity of locomotor activity, eclosion behavior, and for the rhythmic component of the male courtship song that originates in the thoracic nervous system. The biological cycle depends on the rhythmic formation and nuclear localization of the TIM-PER complex. Light induces the degradation of TIM, which promotes elimination of PER. Nuclear activity of the heterodimer coordinatively regulates PER and TIM transcription through a negative feedback loop. Behaves as a negative element in circadian transcriptional loop. Does not appear to bind DNA, suggesting indirect transcriptional inhibition. This is Period circadian protein (per) from Drosophila paulistorum (Fruit fly).